Here is a 127-residue protein sequence, read N- to C-terminus: Histone H2A (127 aa).

Positions 1-20 are enriched in basic residues; it reads MSGRGKGGKAKTGGKAKSRS. The disordered stretch occupies residues 1–23; the sequence is MSGRGKGGKAKTGGKAKSRSSRA. Residue Ser2 is modified to N-acetylserine. Phosphoserine is present on Ser2. Residues Lys6, Lys9, and Lys11 each carry the N6-acetyllysine; partial modification. At Gln106 the chain carries N5-methylglutamine. Residue Lys121 forms a Glycyl lysine isopeptide (Lys-Gly) (interchain with G-Cter in ubiquitin) linkage.

Belongs to the histone H2A family. The nucleosome is a histone octamer containing two molecules each of H2A, H2B, H3 and H4 assembled in one H3-H4 heterotetramer and two H2A-H2B heterodimers. The octamer wraps approximately 147 bp of DNA. Monoubiquitination of Lys-121 gives a specific tag for epigenetic transcriptional repression. In terms of processing, phosphorylation on Ser-2 is enhanced during mitosis. Phosphorylation on Ser-2 directly represses transcription.

It is found in the nucleus. The protein localises to the chromosome. In terms of biological role, core component of nucleosome. Nucleosomes wrap and compact DNA into chromatin, limiting DNA accessibility to the cellular machineries which require DNA as a template. Histones thereby play a central role in transcription regulation, DNA repair, DNA replication and chromosomal stability. DNA accessibility is regulated via a complex set of post-translational modifications of histones, also called histone code, and nucleosome remodeling. In Caenorhabditis elegans, this protein is Histone H2A (his-3).